A 367-amino-acid polypeptide reads, in one-letter code: tRNA-specific 2-thiouridylase MnmA (367 aa).

Residues 14–21 (AMSGGVDS) and Leu40 each bind ATP. Cys108 serves as the catalytic Nucleophile. A disulfide bond links Cys108 and Cys204. An ATP-binding site is contributed by Gly132. Positions 154 to 156 (KDQ) are interaction with tRNA. Cys204 (cysteine persulfide intermediate) is an active-site residue.

This sequence belongs to the MnmA/TRMU family.

It is found in the cytoplasm. It catalyses the reaction S-sulfanyl-L-cysteinyl-[protein] + uridine(34) in tRNA + AH2 + ATP = 2-thiouridine(34) in tRNA + L-cysteinyl-[protein] + A + AMP + diphosphate + H(+). Catalyzes the 2-thiolation of uridine at the wobble position (U34) of tRNA, leading to the formation of s(2)U34. This Rickettsia bellii (strain OSU 85-389) protein is tRNA-specific 2-thiouridylase MnmA.